Consider the following 493-residue polypeptide: Glutamyl-tRNA(Gln) amidotransferase subunit A (493 aa).

Active-site charge relay system residues include Lys-78 and Ser-158. Residue Ser-182 is the Acyl-ester intermediate of the active site.

This sequence belongs to the amidase family. GatA subfamily. In terms of assembly, heterotrimer of A, B and C subunits.

It carries out the reaction L-glutamyl-tRNA(Gln) + L-glutamine + ATP + H2O = L-glutaminyl-tRNA(Gln) + L-glutamate + ADP + phosphate + H(+). Allows the formation of correctly charged Gln-tRNA(Gln) through the transamidation of misacylated Glu-tRNA(Gln) in organisms which lack glutaminyl-tRNA synthetase. The reaction takes place in the presence of glutamine and ATP through an activated gamma-phospho-Glu-tRNA(Gln). In Azorhizobium caulinodans (strain ATCC 43989 / DSM 5975 / JCM 20966 / LMG 6465 / NBRC 14845 / NCIMB 13405 / ORS 571), this protein is Glutamyl-tRNA(Gln) amidotransferase subunit A.